Here is a 192-residue protein sequence, read N- to C-terminus: GTP cyclohydrolase-2 (192 aa).

50-54 (RLHSE) contacts GTP. Zn(2+) is bound by residues C55, C66, and C68. GTP contacts are provided by residues 92-94 (EGR) and T114. Catalysis depends on D126, which acts as the Proton acceptor. The active-site Nucleophile is R128. 2 residues coordinate GTP: T149 and K154.

Belongs to the GTP cyclohydrolase II family. Requires Zn(2+) as cofactor.

It catalyses the reaction GTP + 4 H2O = 2,5-diamino-6-hydroxy-4-(5-phosphoribosylamino)-pyrimidine + formate + 2 phosphate + 3 H(+). The protein operates within cofactor biosynthesis; riboflavin biosynthesis; 5-amino-6-(D-ribitylamino)uracil from GTP: step 1/4. Functionally, catalyzes the conversion of GTP to 2,5-diamino-6-ribosylamino-4(3H)-pyrimidinone 5'-phosphate (DARP), formate and pyrophosphate. The sequence is that of GTP cyclohydrolase-2 from Helicobacter acinonychis (strain Sheeba).